The following is an 87-amino-acid chain: Large ribosomal subunit protein bL31B (87 aa).

It belongs to the bacterial ribosomal protein bL31 family. Type B subfamily. Part of the 50S ribosomal subunit.

This is Large ribosomal subunit protein bL31B from Shigella boydii serotype 4 (strain Sb227).